Consider the following 359-residue polypeptide: 3-dehydroquinate synthase (359 aa).

Residues 71-76 (DAEAAK), 105-109 (GAVTD), 129-130 (TT), lysine 142, and lysine 151 contribute to the NAD(+) site. Residues glutamate 184, histidine 247, and histidine 263 each coordinate Zn(2+).

It belongs to the sugar phosphate cyclases superfamily. Dehydroquinate synthase family. It depends on NAD(+) as a cofactor. Co(2+) is required as a cofactor. Requires Zn(2+) as cofactor.

It localises to the cytoplasm. It catalyses the reaction 7-phospho-2-dehydro-3-deoxy-D-arabino-heptonate = 3-dehydroquinate + phosphate. The protein operates within metabolic intermediate biosynthesis; chorismate biosynthesis; chorismate from D-erythrose 4-phosphate and phosphoenolpyruvate: step 2/7. Catalyzes the conversion of 3-deoxy-D-arabino-heptulosonate 7-phosphate (DAHP) to dehydroquinate (DHQ). This is 3-dehydroquinate synthase from Leifsonia xyli subsp. xyli (strain CTCB07).